The sequence spans 207 residues: Shikimate kinase (207 aa).

32 to 37 is an ATP binding site; that stretch reads GVGKST. Serine 36 serves as a coordination point for Mg(2+). Substrate contacts are provided by aspartate 54, arginine 78, and glycine 100. Residue arginine 138 coordinates ATP. Position 157 (arginine 157) interacts with substrate.

This sequence belongs to the shikimate kinase family. As to quaternary structure, monomer. Mg(2+) is required as a cofactor.

The protein localises to the cytoplasm. It catalyses the reaction shikimate + ATP = 3-phosphoshikimate + ADP + H(+). The protein operates within metabolic intermediate biosynthesis; chorismate biosynthesis; chorismate from D-erythrose 4-phosphate and phosphoenolpyruvate: step 5/7. Its function is as follows. Catalyzes the specific phosphorylation of the 3-hydroxyl group of shikimic acid using ATP as a cosubstrate. In Bradyrhizobium diazoefficiens (strain JCM 10833 / BCRC 13528 / IAM 13628 / NBRC 14792 / USDA 110), this protein is Shikimate kinase.